The sequence spans 477 residues: 3-isopropylmalate dehydratase large subunit (477 aa).

The [4Fe-4S] cluster site is built by Cys-352, Cys-413, and Cys-416.

Belongs to the aconitase/IPM isomerase family. LeuC type 1 subfamily. Heterodimer of LeuC and LeuD. [4Fe-4S] cluster is required as a cofactor.

The catalysed reaction is (2R,3S)-3-isopropylmalate = (2S)-2-isopropylmalate. The protein operates within amino-acid biosynthesis; L-leucine biosynthesis; L-leucine from 3-methyl-2-oxobutanoate: step 2/4. Functionally, catalyzes the isomerization between 2-isopropylmalate and 3-isopropylmalate, via the formation of 2-isopropylmaleate. In Pseudomonas putida (strain ATCC 47054 / DSM 6125 / CFBP 8728 / NCIMB 11950 / KT2440), this protein is 3-isopropylmalate dehydratase large subunit.